We begin with the raw amino-acid sequence, 492 residues long: UDP-N-acetylmuramoyl-L-alanyl-D-glutamate--2,6-diaminopimelate ligase (492 aa).

UDP-N-acetyl-alpha-D-muramoyl-L-alanyl-D-glutamate is bound at residue Ser21. Gly98–Ser104 serves as a coordination point for ATP. Residues Thr144 to Thr145, Ser171, Gln177, and Arg179 each bind UDP-N-acetyl-alpha-D-muramoyl-L-alanyl-D-glutamate. Lys211 carries the N6-carboxylysine modification. Meso-2,6-diaminopimelate-binding positions include Arg372, Asp396 to Arg399, Gly446, and Glu450. The Meso-diaminopimelate recognition motif signature appears at Asp396–Arg399.

This sequence belongs to the MurCDEF family. MurE subfamily. It depends on Mg(2+) as a cofactor. Post-translationally, carboxylation is probably crucial for Mg(2+) binding and, consequently, for the gamma-phosphate positioning of ATP.

It is found in the cytoplasm. The enzyme catalyses UDP-N-acetyl-alpha-D-muramoyl-L-alanyl-D-glutamate + meso-2,6-diaminopimelate + ATP = UDP-N-acetyl-alpha-D-muramoyl-L-alanyl-gamma-D-glutamyl-meso-2,6-diaminopimelate + ADP + phosphate + H(+). Its pathway is cell wall biogenesis; peptidoglycan biosynthesis. In terms of biological role, catalyzes the addition of meso-diaminopimelic acid to the nucleotide precursor UDP-N-acetylmuramoyl-L-alanyl-D-glutamate (UMAG) in the biosynthesis of bacterial cell-wall peptidoglycan. In Rickettsia typhi (strain ATCC VR-144 / Wilmington), this protein is UDP-N-acetylmuramoyl-L-alanyl-D-glutamate--2,6-diaminopimelate ligase.